A 214-amino-acid chain; its full sequence is Threonylcarbamoyl-AMP synthase (214 aa).

Positions 9-214 constitute a YrdC-like domain; that stretch reads TDSVIQAAHW…GDALTGQIIR (206 aa).

Belongs to the SUA5 family. TsaC subfamily.

The protein localises to the cytoplasm. The catalysed reaction is L-threonine + hydrogencarbonate + ATP = L-threonylcarbamoyladenylate + diphosphate + H2O. In terms of biological role, required for the formation of a threonylcarbamoyl group on adenosine at position 37 (t(6)A37) in tRNAs that read codons beginning with adenine. Catalyzes the conversion of L-threonine, HCO(3)(-)/CO(2) and ATP to give threonylcarbamoyl-AMP (TC-AMP) as the acyladenylate intermediate, with the release of diphosphate. This Psychrobacter arcticus (strain DSM 17307 / VKM B-2377 / 273-4) protein is Threonylcarbamoyl-AMP synthase.